A 50-amino-acid polypeptide reads, in one-letter code: Inducible serine protease inhibitor 1 (50 aa).

The disordered stretch occupies residues 1–27 (DLVXGTNFXKNNPXSTRVAANSXRSPS). Residues 8–25 (FXKNNPXSTRVAANSXRS) are compositionally biased toward polar residues.

Functionally, inhibits trypsin and the toxin protease PR2 of M.anisopliae. Does not inhibit chymotrypsin, subtilisin Carlsberg, proteinase K, porcine pancreatic elastase and the toxin protease PR1 of M.anisopliae. The protein is Inducible serine protease inhibitor 1 of Galleria mellonella (Greater wax moth).